The primary structure comprises 387 residues: Formate-dependent phosphoribosylglycinamide formyltransferase (387 aa).

Residues 15–16 (EL) and glutamate 75 each bind N(1)-(5-phospho-beta-D-ribosyl)glycinamide. ATP contacts are provided by residues arginine 106, lysine 147, 152 to 157 (SSGKGQ), 187 to 190 (EEFI), and glutamate 195. Positions 111-301 (DLASNELNIR…EFELHLRAVL (191 aa)) constitute an ATP-grasp domain. Glutamate 260 and glutamate 272 together coordinate Mg(2+). N(1)-(5-phospho-beta-D-ribosyl)glycinamide is bound by residues aspartate 279, lysine 349, and 356-357 (RR).

This sequence belongs to the PurK/PurT family. As to quaternary structure, homodimer.

It carries out the reaction N(1)-(5-phospho-beta-D-ribosyl)glycinamide + formate + ATP = N(2)-formyl-N(1)-(5-phospho-beta-D-ribosyl)glycinamide + ADP + phosphate + H(+). Its pathway is purine metabolism; IMP biosynthesis via de novo pathway; N(2)-formyl-N(1)-(5-phospho-D-ribosyl)glycinamide from N(1)-(5-phospho-D-ribosyl)glycinamide (formate route): step 1/1. Involved in the de novo purine biosynthesis. Catalyzes the transfer of formate to 5-phospho-ribosyl-glycinamide (GAR), producing 5-phospho-ribosyl-N-formylglycinamide (FGAR). Formate is provided by PurU via hydrolysis of 10-formyl-tetrahydrofolate. The sequence is that of Formate-dependent phosphoribosylglycinamide formyltransferase from Prochlorococcus marinus (strain NATL1A).